Here is a 92-residue protein sequence, read N- to C-terminus: MPRSLKKSPFVAYHLLKKINQMNKAGKKDTITTWSRSSTILPSMIGFTIAVYNGKQHVPIFISDQLVGHKLGEFVSTRNFRTHIKADRKTKR.

It belongs to the universal ribosomal protein uS19 family.

The protein localises to the plastid. Its subcellular location is the chloroplast. Functionally, protein S19 forms a complex with S13 that binds strongly to the 16S ribosomal RNA. The sequence is that of Small ribosomal subunit protein uS19c from Phaeodactylum tricornutum (strain CCAP 1055/1).